The primary structure comprises 176 residues: MKLIEVDEELYRYIAAHTQYIGESASEILRRMFSLTQKKQTEIKIKKTPKIHQSSVKATLFSRIQILNDILSSETYASKNKVIARFMLILSTLYDLDSKAFSVAAESLQGRKRAYFSGSKNFLLKNGTHTKPKQIPKTPYWVITNTNSERKRTMLKNMMIAMKFPNEIAKKVSQTI.

Belongs to the SeqA family. In terms of assembly, homodimer. Polymerizes to form helical filaments.

It localises to the cytoplasm. Functionally, negative regulator of replication initiation, which contributes to regulation of DNA replication and ensures that replication initiation occurs exactly once per chromosome per cell cycle. Binds to pairs of hemimethylated GATC sequences in the oriC region, thus preventing assembly of replication proteins and re-initiation at newly replicated origins. Repression is relieved when the region becomes fully methylated. The sequence is that of Negative modulator of initiation of replication from Hamiltonella defensa subsp. Acyrthosiphon pisum (strain 5AT).